The chain runs to 429 residues: Phosphoribosylamine--glycine ligase (429 aa).

An ATP-grasp domain is found at 108-315 (KDFLARHRIP…LVLLVEAALA (208 aa)). 134–195 (LHEQGAPIVI…EEFLDGEEAS (62 aa)) lines the ATP pocket. 2 residues coordinate Mg(2+): glutamate 285 and asparagine 287.

This sequence belongs to the GARS family. Mg(2+) serves as cofactor. Requires Mn(2+) as cofactor.

The enzyme catalyses 5-phospho-beta-D-ribosylamine + glycine + ATP = N(1)-(5-phospho-beta-D-ribosyl)glycinamide + ADP + phosphate + H(+). Its pathway is purine metabolism; IMP biosynthesis via de novo pathway; N(1)-(5-phospho-D-ribosyl)glycinamide from 5-phospho-alpha-D-ribose 1-diphosphate: step 2/2. The sequence is that of Phosphoribosylamine--glycine ligase from Pseudomonas aeruginosa (strain ATCC 15692 / DSM 22644 / CIP 104116 / JCM 14847 / LMG 12228 / 1C / PRS 101 / PAO1).